Here is an 842-residue protein sequence, read N- to C-terminus: Elongation factor 2 (842 aa).

In terms of domain architecture, tr-type G spans 17–346 (TNVRNMSVIA…MIVLHLPSPV (330 aa)). GTP-binding positions include 26–33 (AHVDHGKS), 158–161 (NKVD), and 213–215 (SGL). Lys-509 carries the N6,N6,N6-trimethyllysine; by EFM3; alternate modification. N6,N6-dimethyllysine; by EFM3; alternate is present on Lys-509. The residue at position 509 (Lys-509) is an N6-methyllysine; by EFM3; alternate. Ser-579 is subject to Phosphoserine. Lys-613 is modified (N6,N6-dimethyllysine; by EFM2; alternate). Position 613 is an N6-methyllysine; by EFM2; alternate (Lys-613). His-699 carries the post-translational modification Diphthamide. Phosphothreonine occurs at positions 713 and 763. Lys-841 participates in a covalent cross-link: Glycyl lysine isopeptide (Lys-Gly) (interchain with G-Cter in ubiquitin).

Belongs to the TRAFAC class translation factor GTPase superfamily. Classic translation factor GTPase family. EF-G/EF-2 subfamily. In terms of assembly, binds to 80S ribosomes. Actively translating ribosomes show mutually exclusive binding of eIF5a (HYP2 or ANB1) and EFT1/eEF2. Interacts with the 40S ribosomal subunit protein RPL9A; the interaction is direct. Interacts with the 60S ribosomal subunit proteins RPL12A; the interaction is direct. Interacts with RPS23A; the interaction is direct. Interacts with 18S rRNA; the interaction is direct. Interacts with 25S rRNA; the interaction is direct. Interacts with RPL0. Interacts with STM1; promoting ribosome inactivation. In terms of processing, (Microbial infection) Diphthamide can be ADP-ribosylated by diphtheria toxin and by Pseudomonas exotoxin A, thus abolishing its function.

The protein resides in the cytoplasm. It catalyses the reaction GTP + H2O = GDP + phosphate + H(+). Its pathway is protein biosynthesis; polypeptide chain elongation. Inhibited by fusidic acid and sordarin, which prevent the release of eEF2 from the ribosome after the translocation step. While fusidic acid acts on all eukaryotic eEF2, sordarin specifically binds and inhibits only selected fungal eEF2. Catalyzes the GTP-dependent ribosomal translocation step during translation elongation. During this step, the ribosome changes from the pre-translocational (PRE) to the post-translocational (POST) state as the newly formed A-site-bound peptidyl-tRNA and P-site-bound deacylated tRNA move to the P and E sites, respectively. Catalyzes the coordinated movement of the two tRNA molecules, the mRNA and conformational changes in the ribosome. The chain is Elongation factor 2 (EFT1) from Saccharomyces cerevisiae (strain ATCC 204508 / S288c) (Baker's yeast).